Consider the following 322-residue polypeptide: Nucleoprotein (322 aa).

Residues Tyr-43, Tyr-46, Val-76, Arg-122, Lys-240, and Ser-269 each coordinate RNA.

The protein belongs to the tenuiviruses nucleocapsid protein family.

The protein resides in the virion. It is found in the host cytoplasm. Its function is as follows. Encapsidates the genome, protecting it from nucleases. The encapsidated genomic RNA is termed the nucleocapsid (NC), and serves as template for viral transcription and replication. This chain is Nucleoprotein, found in Avena sativa (Oat).